Here is a 171-residue protein sequence, read N- to C-terminus: S-ribosylhomocysteine lyase (171 aa).

Fe cation contacts are provided by H54, H58, and C128.

It belongs to the LuxS family. Homodimer. Requires Fe cation as cofactor.

The catalysed reaction is S-(5-deoxy-D-ribos-5-yl)-L-homocysteine = (S)-4,5-dihydroxypentane-2,3-dione + L-homocysteine. Its function is as follows. Involved in the synthesis of autoinducer 2 (AI-2) which is secreted by bacteria and is used to communicate both the cell density and the metabolic potential of the environment. The regulation of gene expression in response to changes in cell density is called quorum sensing. Catalyzes the transformation of S-ribosylhomocysteine (RHC) to homocysteine (HC) and 4,5-dihydroxy-2,3-pentadione (DPD). This is S-ribosylhomocysteine lyase from Yersinia pseudotuberculosis serotype O:1b (strain IP 31758).